The following is a 596-amino-acid chain: Polyphenol oxidase B, chloroplastic (596 aa).

The tract at residues 1-23 (MASVVCNSSSSTTTTTLKTPFTS) is disordered. Residues 1–87 (MASVVCNSSS…ANAIPLAASA (87 aa)) constitute a chloroplast transit peptide. Positions 8–23 (SSSSTTTTTLKTPFTS) are enriched in low complexity. 2 disulfides stabilise this stretch: cysteine 98-cysteine 114 and cysteine 113-cysteine 182. Residues histidine 181, histidine 199, histidine 208, histidine 329, histidine 333, and histidine 371 each contribute to the Cu cation site. Residues 185–199 (CNGAYIIGGKELQVH) constitute a cross-link (2'-(S-cysteinyl)-histidine (Cys-His)).

This sequence belongs to the tyrosinase family. Cu(2+) is required as a cofactor.

It localises to the plastid. The protein localises to the chloroplast thylakoid lumen. It carries out the reaction 2 catechol + O2 = 2 1,2-benzoquinone + 2 H2O. Functionally, catalyzes the oxidation of mono- and o-diphenols to o-diquinones. In Solanum lycopersicum (Tomato), this protein is Polyphenol oxidase B, chloroplastic.